The sequence spans 329 residues: MLKWFIISCCLLTAISYSTYYLFTSNSWIKTVKTHTYSRFYQLIKENTKTQLDRLQEEAKLSGKSLIPPFINFDREYAIAPKYNISICRIKKSMSTLMSGVACVLYDTGKFMRNNRSILEVWSHRFCGEKNEYRRMNEVKWRMGDAHHTFKKIVVIRDPIARFISFFSNKCIFEAQKYPDRKQCYNCQGNVTCFLEKQYERFVQHSSDYSRIRPSYEDKHAAPLSWNCEFGKFLKDYKIIKLAVDPKDRKNGLANLMNVLKESNVPNSTLRFIEKSALEGETMHATYDSDAHDVVKKEIENDKKIREWLKRIYYLDFVIFDFDTTFINS.

The Cytoplasmic segment spans residues 1-3; it reads MLK. Residues 4 to 23 form a helical; Signal-anchor for type II membrane protein membrane-spanning segment; it reads WFIISCCLLTAISYSTYYLF. At 24-329 the chain is on the lumenal side; it reads TSNSWIKTVK…FDFDTTFINS (306 aa). Residues 91-97 and 157-165 each bind 3'-phosphoadenylyl sulfate; these read KKSMSTL and RDPIARFIS.

It belongs to the sulfotransferase 2 family. Highly expressed in the head and tail of hermaphrodites, in particular in amphid and phasmid sheath cells.

The protein localises to the golgi apparatus membrane. It catalyses the reaction chondroitin beta-D-glucuronate + n 3'-phosphoadenylyl sulfate = chondroitin 4'-sulfate + n adenosine 3',5'-bisphosphate + n H(+). Catalyzes the transfer of sulfate to position 4 of non-reducing N-acetylgalactosamine (GalNAc) residue of chondroitin. In Caenorhabditis elegans, this protein is Carbohydrate sulfotransferase chst-1.